Consider the following 306-residue polypeptide: Pantothenate kinase (306 aa).

Gly91–Ser98 lines the ATP pocket.

It belongs to the prokaryotic pantothenate kinase family.

The protein resides in the cytoplasm. The enzyme catalyses (R)-pantothenate + ATP = (R)-4'-phosphopantothenate + ADP + H(+). It functions in the pathway cofactor biosynthesis; coenzyme A biosynthesis; CoA from (R)-pantothenate: step 1/5. In Streptococcus agalactiae serotype Ia (strain ATCC 27591 / A909 / CDC SS700), this protein is Pantothenate kinase.